The sequence spans 99 residues: DNA-binding protein Fis (99 aa).

Positions 75-94 (QTRAATMLGINRGTLRKKLK) form a DNA-binding region, H-T-H motif.

This sequence belongs to the transcriptional regulatory Fis family. In terms of assembly, homodimer.

Activates ribosomal RNA transcription. Plays a direct role in upstream activation of rRNA promoters. The polypeptide is DNA-binding protein Fis (Pasteurella multocida (strain Pm70)).